The sequence spans 521 residues: Cytochrome P450 monooxygenase sdnF (521 aa).

A helical transmembrane segment spans residues 19 to 39; the sequence is YLGLLLSGTVLYTVYKLIIAI. Residues N178, N186, N191, N309, and N416 are each glycosylated (N-linked (GlcNAc...) asparagine). C460 is a binding site for heme.

The protein belongs to the cytochrome P450 family. Heme serves as cofactor.

It is found in the membrane. It participates in antibiotic biosynthesis. Functionally, cytochrome P450 monooxygenase; part of the gene cluster that mediates the biosynthesis of sordarin and hypoxysordarin, glycoside antibiotics with a unique tetracyclic diterpene aglycone structure. First, the geranylgeranyl diphosphate synthase sdnC constructs GGDP from farnesyl diphosphate and isopentenyl diphosphate. The diterpene cyclase sdnA then catalyzes the cyclization of GGDP to afford cycloaraneosene. Cycloaraneosene is then hydroxylated four times by the putative cytochrome P450 monooxygenases sdnB, sdnE, sdnF and sdnH to give a hydroxylated cycloaraneosene derivative such as cycloaraneosene-8,9,13,19-tetraol. Although the order of the hydroxylations is unclear, at least C8, C9 and C13 of the cycloaraneosene skeleton are hydroxylated before the sordaricin formation. Dehydration of the 13-hydroxy group of the hydroxylated cycloaraneosene derivative might be catalyzed by an unassigned hypothetical protein such as sdnG and sdnP to construct the cyclopentadiene moiety. The FAD-dependent oxidoreductase sdnN is proposed to catalyze the oxidation at C9 of the hydroxylated cycloaraneosene derivative and also catalyze the Baeyer-Villiger oxidation to give the lactone intermediate. The presumed lactone intermediate would be hydrolyzed to give an acrolein moiety and a carboxylate moiety. Then, [4+2]cycloaddition would occur between the acrolein moiety and the cyclopentadiene moiety to give sordaricin. SdnN might also be involved in the [4+2]cycloaddition after the hypothesized oxidation to accommodate the oxidized product and prompt the [4+2]cycloaddition. GDP-6-deoxy-D-altrose may be biosynthesized from GDP-D-mannose by the putative GDP-mannose-4,6-dehydratase sdnI and the short-chain dehydrogenase sdnK. The glycosyltransferase sdnJ catalyzes the attachment of 6-deoxy-D-altrose onto the 19-hydroxy group of sordaricin to give 4'-O-demethylsordarin. The methyltransferase sdnD would complete the biosynthesis of sordarin. Sordarin can be further modified into hypoxysordarin. The unique acyl chain at the 3'-hydroxy group of hypoxysordarin would be constructed by an iterative type I PKS sdnO and the trans-acting polyketide methyltransferase sdnL. SdnL would be responsible for the introduction of an alpha-methyl group of the polyketide chain. Alternatively, the beta-lactamase-like protein sdnR might be responsible for the cleavage and transfer of the polyketide chain from the PKS sdnO to sordarin. Two putative cytochrome P450 monooxygenases, sdnQ and sdnT, might catalyze the epoxidations of the polyketide chain to complete the biosynthesis of hypoxysordarin. Transcriptional regulators sdnM and sdnS are presumably encoded for the transcriptional regulation of the expression of the sdn gene cluster. In Sordaria araneosa (Pleurage araneosa), this protein is Cytochrome P450 monooxygenase sdnF.